The following is a 1076-amino-acid chain: Probable cellulose synthase A catalytic subunit 1 [UDP-forming] (1076 aa).

Topologically, residues 1-267 are cytoplasmic; that stretch reads MAANAGMVAG…SRIVPIPSNQ (267 aa). The Zn(2+) site is built by C41, C44, C60, C63, C68, C71, C83, and C86. The RING-type; degenerate zinc-finger motif lies at 41–87; sequence CQICGDTVGVSATGDVFVACNECAFPVCRPCYEYERKEGNQCCPQCK. Residues 119–179 form a disordered region; the sequence is HGNGKGPEWQ…HSIRSGTSSY (61 aa). A helical transmembrane segment spans residues 268–288; sequence LNLYRIVIILRLIILMFFFQY. Over 289-296 the chain is Extracellular; that stretch reads RVTHPVRD. Residues 297-317 traverse the membrane as a helical segment; the sequence is AYGLWLVSVICEIWFALSWLL. Topologically, residues 318-851 are cytoplasmic; it reads DQFPKWYPIN…LLERLAYINT (534 aa). UDP-alpha-D-glucose contacts are provided by S356, K362, E363, and D392. Residue D392 is part of the active site. Positions 446–473 form a coiled coil; it reads VKERRAMKREYEEFKVRINALVAKAQKV. K533 serves as a coordination point for UDP-alpha-D-glucose. 2 residues coordinate Mn(2+): K534 and D558. D775 is a catalytic residue. A helical membrane pass occupies residues 852–872; sequence IVYPITSIPLIAYCVLPAICL. At 873 to 884 the chain is on the extracellular side; sequence LTNKFIIPEISN. A helical membrane pass occupies residues 885–905; that stretch reads YAGMFFILLFASIFATGILEL. Topologically, residues 906–920 are cytoplasmic; sequence RWSGVGIEDWWRNEQ. A helical transmembrane segment spans residues 921–941; it reads FWVIGGTSAHLFAVFQGLLKV. Residues 942–971 are Extracellular-facing; sequence LAGIDTNFTVTSKASDEDGDFAELYVFKWT. Residue N948 is glycosylated (N-linked (GlcNAc...) asparagine). A helical membrane pass occupies residues 972–992; the sequence is SLLIPPTTVLVINLVGMVAGI. Residues 993 to 1003 are Cytoplasmic-facing; the sequence is SYAINSGYQSW. A helical membrane pass occupies residues 1004-1024; sequence GPLFGKLFFSIWVILHLYPFL. Over 1025 to 1033 the chain is Extracellular; it reads KGLMGRQNR. The chain crosses the membrane as a helical span at residues 1034–1054; sequence TPTIVIVWSILLASIFSLLWV. Residues 1055–1076 lie on the Cytoplasmic side of the membrane; that stretch reads KIDPFISPTQKAVALGQCGVNC.

This sequence belongs to the glycosyltransferase 2 family. Plant cellulose synthase subfamily. Zn(2+) is required as a cofactor. Mn(2+) serves as cofactor.

It localises to the cell membrane. The enzyme catalyses [(1-&gt;4)-beta-D-glucosyl](n) + UDP-alpha-D-glucose = [(1-&gt;4)-beta-D-glucosyl](n+1) + UDP + H(+). It participates in glycan metabolism; plant cellulose biosynthesis. Functionally, catalytic subunit of cellulose synthase terminal complexes ('rosettes'), required for beta-1,4-glucan microfibril crystallization, a major mechanism of the cell wall formation. The polypeptide is Probable cellulose synthase A catalytic subunit 1 [UDP-forming] (CESA1) (Oryza sativa subsp. indica (Rice)).